A 186-amino-acid chain; its full sequence is Transposon Tn21 resolvase (186 aa).

Residues Gln-4–Gly-137 enclose the Resolvase/invertase-type recombinase catalytic domain. The active-site O-(5'-phospho-DNA)-serine intermediate is Ser-12. A DNA-binding region (H-T-H motif) is located at residues Lys-164–Arg-183.

It belongs to the site-specific recombinase resolvase family.

Resolvase catalyzes the resolution (a site-specific recombination) of the cointegrated replicon to yield the final transposition products. This Escherichia coli protein is Transposon Tn21 resolvase (tnpR).